A 289-amino-acid polypeptide reads, in one-letter code: Serine/threonine-protein phosphatase Pgam5, mitochondrial (289 aa).

A helical transmembrane segment spans residues 7–23 (FACGTGAGLAAYYLQKL).

Belongs to the phosphoglycerate mutase family. BPG-dependent PGAM subfamily. In terms of assembly, interacts with Pk92B/ASK1.

The protein resides in the mitochondrion outer membrane. It carries out the reaction O-phospho-L-seryl-[protein] + H2O = L-seryl-[protein] + phosphate. It catalyses the reaction O-phospho-L-threonyl-[protein] + H2O = L-threonyl-[protein] + phosphate. Its function is as follows. Displays phosphatase activity for serine/threonine residues, and dephosphorylates and activates Pk92B kinase. Has apparently no phosphoglycerate mutase activity. This chain is Serine/threonine-protein phosphatase Pgam5, mitochondrial, found in Drosophila virilis (Fruit fly).